We begin with the raw amino-acid sequence, 570 residues long: Serine/threonine-protein kinase Pink1, mitochondrial (570 aa).

The transit peptide at 1–5 (MSVRA) directs the protein to the mitochondrion. At 6–96 (VGSRLFKHGR…AELRKKATRR (91 aa)) the chain is on the mitochondrial intermembrane side. The helical transmembrane segment at 97–120 (ILFGDSAPFFALVGVSIASGTGIL) threads the bilayer. At 121-570 (TKEEELEGVC…WIQENLPELD (450 aa)) the chain is on the cytoplasmic side. In terms of domain architecture, Protein kinase spans 162-484 (LSLGKPIAKG…VAANVCQLFL (323 aa)). Residue Lys-196 coordinates ATP. Ser-205 bears the Phosphoserine; by autocatalysis mark. Glu-217 is a Mg(2+) binding site. Positions 295, 297, and 300 each coordinate ATP. Asp-337 acts as the Proton acceptor in catalysis. Position 341 (Asp-341) interacts with ATP. 2 residues coordinate Mg(2+): Asn-342 and Asp-359. Asp-359 provides a ligand contact to ATP. Ser-377 carries the post-translational modification Phosphoserine; by autocatalysis. Phosphothreonine; by autocatalysis is present on Thr-386. Thr-530 is subject to Phosphothreonine.

Belongs to the protein kinase superfamily. Ser/Thr protein kinase family. Mg(2+) is required as a cofactor. Proteolytically cleaved. In healthy cells, the precursor is continuously imported into mitochondria where it is proteolytically cleaved into its short form by the mitochondrial rhomboid protease rho-7 (TcasGA2_TC013516). The short form is then released into the cytosol where it rapidly undergoes proteasome-dependent degradation. In unhealthy cells, when cellular stress conditions lead to the loss of mitochondrial membrane potential, mitochondrial import is impaired leading to the precursor accumulating on the outer mitochondrial membrane (OMM). Post-translationally, autophosphorylated on Ser-205, which activates kinase activity and is required for substrate recognition. Loss of mitochondrial membrane potential results in the precursor accumulating on the outer mitochondrial membrane (OMM) where it is activated by autophosphorylation at Ser-205. Autophosphorylation is sufficient and essential for selective recruitment of park to depolarized mitochondria, likely via Pink1-dependent phosphorylation of polyubiquitin chains. Also autophosphorylated at Ser-377, Thr-386 and possibly Thr-530. Another report found evidence of autophosphorylation at Ser-154, Thr-186, Thr-218, Ser-267 and Thr-530, as well as a number of other minor sites, but determined that phosphorylation at these sites is not required for enzyme activity and may not occur in vivo.

It is found in the mitochondrion outer membrane. Its subcellular location is the mitochondrion inner membrane. The protein localises to the cytoplasm. It localises to the cytosol. The enzyme catalyses L-seryl-[protein] + ATP = O-phospho-L-seryl-[protein] + ADP + H(+). The catalysed reaction is L-threonyl-[protein] + ATP = O-phospho-L-threonyl-[protein] + ADP + H(+). Acts as a serine/threonine-protein kinase. Exhibits a substrate preference for proline at position P+1 and a general preference at several residues for basic residues such as arginine. Also exhibits moderate preferences for a phosphotyrosine at position P-3 and a tryptophan at P-5. Critical to mitochondrial homeostasis it mediates several pathways that maintain mitochondrial health and function. Protects against mitochondrial dysfunction during cellular stress by phosphorylating mitochondrial proteins such as park and likely Drp1, to coordinate mitochondrial quality control mechanisms that remove and replace dysfunctional mitochondrial components. Depending on the severity of mitochondrial damage and/or dysfunction, activity ranges from preventing apoptosis and stimulating mitochondrial biogenesis to regulating mitochondrial dynamics and eliminating severely damaged mitochondria via mitophagy. Appears to be particularly important in maintaining the physiology and function of cells with high energy demands that are undergoing stress or altered metabolic environment, including spermatids, muscle cells and neurons such as the dopaminergic (DA) neurons. Mediates the translocation and activation of park at the outer membrane (OMM) of dysfunctional/depolarized mitochondria. At the OMM of damaged mitochondria, phosphorylates pre-existing polyubiquitin chains, the Pink1-phosphorylated polyubiquitin then recruits park from the cytosol to the OMM where park is fully activated by phosphorylation at 'Ser-80' by Pink1. When cellular stress results in irreversible mitochondrial damage, functions with park to promote the clearance of dysfunctional and/or depolarized mitochondria by selective autophagy (mitophagy). The Pink1-park pathway also promotes fission and/or inhibits fusion of damaged mitochondria, by phosphorylating and thus promoting the park-dependent degradation of proteins involved in mitochondrial fusion/fission such as Marf, Opa1 and fzo. This prevents the refusion of unhealthy mitochondria with the mitochondrial network or initiates mitochondrial fragmentation facilitating their later engulfment by autophagosomes. Also likely to promote mitochondrial fission independently of park and Atg7-mediated mitophagy, via the phosphorylation and activation of Drp1. Regulates motility of damaged mitochondria by phosphorylating Miro which likely promotes its park-dependent degradation by the proteasome; in motor neurons, this inhibits mitochondrial intracellular anterograde transport along the axons which probably increases the chance of the mitochondria being eliminated in the soma. The Pink1-park pathway is also involved in mitochondrial regeneration processes such as promoting mitochondrial biogenesis, activating localized mitochondrial repair, promoting selective turnover of mitochondrial proteins and initiating the mitochondrial import of endogenous proteins. Involved in mitochondrial biogenesis by promoting the park-dependent ubiquitination of transcriptional repressor Paris which leads to its subsequent proteasomal degradation and allows activation of the transcription factor srl. Functions with park to promote localized mitochondrial repair by activating the translation of specific nuclear-encoded mitochondrial RNAs (nc-mtRNAs) on the mitochondrial surface, including several key electron transport chain component nc-mtRNAs. During oogenesis, phosphorylates and inactivates larp on the membrane of defective mitochondria, thus impairing local translation and mtDNA replication and consequently, reducing transmission of deleterious mtDNA mutations to the mature oocyte. Phosphorylates the mitochondrial acyl-CoA dehydrogenase Mcad, and appears to be important for maintaining fatty acid and amino acid metabolism via a mechanism that is independent of it's role in maintaining production of ATP. This chain is Serine/threonine-protein kinase Pink1, mitochondrial, found in Tribolium castaneum (Red flour beetle).